The following is a 375-amino-acid chain: Dual specificity protein phosphatase 4 (375 aa).

The Rhodanese domain occupies 25–143; the sequence is SGGRCLLLDC…FASEYPEFCA (119 aa). The Tyrosine-protein phosphatase domain occupies 176–317; that stretch reads GPVEILPFLY…LLQFESQVLA (142 aa). Cys-261 functions as the Phosphocysteine intermediate in the catalytic mechanism.

This sequence belongs to the protein-tyrosine phosphatase family. Non-receptor class dual specificity subfamily.

It is found in the nucleus. It catalyses the reaction O-phospho-L-tyrosyl-[protein] + H2O = L-tyrosyl-[protein] + phosphate. The catalysed reaction is O-phospho-L-seryl-[protein] + H2O = L-seryl-[protein] + phosphate. It carries out the reaction O-phospho-L-threonyl-[protein] + H2O = L-threonyl-[protein] + phosphate. In terms of biological role, regulates mitogenic signal transduction by dephosphorylating both Thr and Tyr residues on MAP kinases ERK1 and ERK2. The protein is Dual specificity protein phosphatase 4 (DUSP4) of Gallus gallus (Chicken).